A 1342-amino-acid polypeptide reads, in one-letter code: DNA-directed RNA polymerase subunit beta (1342 aa).

Belongs to the RNA polymerase beta chain family. In terms of assembly, the RNAP catalytic core consists of 2 alpha, 1 beta, 1 beta' and 1 omega subunit. When a sigma factor is associated with the core the holoenzyme is formed, which can initiate transcription.

The catalysed reaction is RNA(n) + a ribonucleoside 5'-triphosphate = RNA(n+1) + diphosphate. Its function is as follows. DNA-dependent RNA polymerase catalyzes the transcription of DNA into RNA using the four ribonucleoside triphosphates as substrates. The chain is DNA-directed RNA polymerase subunit beta from Vibrio parahaemolyticus serotype O3:K6 (strain RIMD 2210633).